We begin with the raw amino-acid sequence, 405 residues long: Phosphoglycerate kinase (405 aa).

Residues 24-26 (DFN), Arg-40, 63-66 (HLGR), Arg-122, and Arg-162 contribute to the substrate site. Residues Lys-213, Glu-332, and 361-364 (GGDS) each bind ATP.

This sequence belongs to the phosphoglycerate kinase family. In terms of assembly, monomer.

The protein resides in the cytoplasm. The catalysed reaction is (2R)-3-phosphoglycerate + ATP = (2R)-3-phospho-glyceroyl phosphate + ADP. It participates in carbohydrate degradation; glycolysis; pyruvate from D-glyceraldehyde 3-phosphate: step 2/5. The polypeptide is Phosphoglycerate kinase (Corynebacterium diphtheriae (strain ATCC 700971 / NCTC 13129 / Biotype gravis)).